We begin with the raw amino-acid sequence, 342 residues long: Anthranilate phosphoribosyltransferase (342 aa).

5-phospho-alpha-D-ribose 1-diphosphate contacts are provided by residues Gly-90, 93-94 (GD), Thr-98, 100-103 (NIST), 118-126 (KHGNRSVSS), and Ala-130. Gly-90 is an anthranilate binding site. Ser-102 contacts Mg(2+). Residue Asn-121 coordinates anthranilate. Arg-176 is a binding site for anthranilate. Mg(2+)-binding residues include Asp-234 and Glu-235.

The protein belongs to the anthranilate phosphoribosyltransferase family. As to quaternary structure, homodimer. The cofactor is Mg(2+).

It carries out the reaction N-(5-phospho-beta-D-ribosyl)anthranilate + diphosphate = 5-phospho-alpha-D-ribose 1-diphosphate + anthranilate. Its pathway is amino-acid biosynthesis; L-tryptophan biosynthesis; L-tryptophan from chorismate: step 2/5. Functionally, catalyzes the transfer of the phosphoribosyl group of 5-phosphorylribose-1-pyrophosphate (PRPP) to anthranilate to yield N-(5'-phosphoribosyl)-anthranilate (PRA). The chain is Anthranilate phosphoribosyltransferase from Mannheimia succiniciproducens (strain KCTC 0769BP / MBEL55E).